Here is a 20-residue protein sequence, read N- to C-terminus: Apidaecin 3+ (20 aa).

Residues 1–20 (GKPSRPRPAPIQPRPPHPRL) are disordered.

It belongs to the apidaecin family.

It is found in the secreted. Functionally, antimicrobial peptide active against many Gram-negative enterobacterial and plant-associated bacterial species. Not active against other bacterial species like H.pylori, P.mirabilis, B.pertussis or N.gonorrhoeae. Its function is as follows. Among others, also active against S.typhi. Not active against S.typhi. The polypeptide is Apidaecin 3+ (Pimpla disparis (Parasitic wasp)).